The sequence spans 279 residues: Very long chain fatty acid elongase 2 (279 aa).

7 helical membrane passes run 12–32 (WFLL…LLSI), 50–70 (ILTL…VELV), 98–118 (VLWW…FFVL), 136–156 (MFNI…FFGP), 158–178 (LNSF…FPSM), 188–208 (LTQA…SAVV), and 213–233 (FPFG…ILFL). The short motif at 276–279 (KKVQ) is the Di-lysine motif element.

It belongs to the ELO family. ELOVL2 subfamily. Interacts with TECR.

It is found in the endoplasmic reticulum membrane. The catalysed reaction is a very-long-chain acyl-CoA + malonyl-CoA + H(+) = a very-long-chain 3-oxoacyl-CoA + CO2 + CoA. It catalyses the reaction (7Z,10Z,13Z,16Z,19Z)-docosapentaenoyl-CoA + malonyl-CoA + H(+) = (9Z,12Z,15Z,18Z,21Z)-3-oxotetracosapentaenoyl-CoA + CO2 + CoA. The enzyme catalyses (5Z,8Z,11Z,14Z,17Z)-eicosapentaenoyl-CoA + malonyl-CoA + H(+) = 3-oxo-(7Z,10Z,13Z,16Z,19Z)-docosapentaenoyl-CoA + CO2 + CoA. It carries out the reaction (5Z,8Z,11Z,14Z)-eicosatetraenoyl-CoA + malonyl-CoA + H(+) = (7Z,10Z,13Z,16Z)-3-oxodocosatetraenoyl-CoA + CO2 + CoA. The catalysed reaction is (7Z,10Z,13Z,16Z)-docosatetraenoyl-CoA + malonyl-CoA + H(+) = (9Z,12Z,15Z,18Z)-3-oxotetracosatetraenoyl-CoA + CO2 + CoA. The protein operates within lipid metabolism; polyunsaturated fatty acid biosynthesis. Functionally, catalyzes the first and rate-limiting reaction of the four reactions that constitute the long-chain fatty acids elongation cycle. This endoplasmic reticulum-bound enzymatic process allows the addition of 2 carbons to the chain of long- and very long-chain fatty acids (VLCFAs) per cycle. Condensing enzyme that catalyzes the synthesis of polyunsaturated very long chain fatty acid (C20- and C22-PUFA), acting specifically toward polyunsaturated acyl-CoA with the higher activity toward C20:4(n-6) acyl-CoA. May participate in the production of polyunsaturated VLCFAs of different chain lengths that are involved in multiple biological processes as precursors of membrane lipids and lipid mediators. The sequence is that of Very long chain fatty acid elongase 2 from Rattus norvegicus (Rat).